We begin with the raw amino-acid sequence, 413 residues long: Coiled-coil domain-containing protein 83 (413 aa).

The disordered stretch occupies residues 1–21 (MENSGKANKKDTHDGPPKEIK). Residues 8–21 (NKKDTHDGPPKEIK) show a composition bias toward basic and acidic residues. Coiled-coil stretches lie at residues 37–184 (EDAV…RKKI) and 216–256 (WEND…LSNC).

The chain is Coiled-coil domain-containing protein 83 (CCDC83) from Homo sapiens (Human).